Reading from the N-terminus, the 329-residue chain is 36 kDa antigen (329 aa).

Residues 11–31 (AILTGGGALLLGLIVLFYLAY) form a helical membrane-spanning segment.

Belongs to the membrane fusion protein (MFP) (TC 8.A.1) family.

It is found in the membrane. The chain is 36 kDa antigen from Helicobacter pylori (strain J99 / ATCC 700824) (Campylobacter pylori J99).